Consider the following 179-residue polypeptide: ATP synthase subunit delta (179 aa).

It belongs to the ATPase delta chain family. F-type ATPases have 2 components, F(1) - the catalytic core - and F(0) - the membrane proton channel. F(1) has five subunits: alpha(3), beta(3), gamma(1), delta(1), epsilon(1). F(0) has three main subunits: a(1), b(2) and c(10-14). The alpha and beta chains form an alternating ring which encloses part of the gamma chain. F(1) is attached to F(0) by a central stalk formed by the gamma and epsilon chains, while a peripheral stalk is formed by the delta and b chains.

Its subcellular location is the cell inner membrane. In terms of biological role, f(1)F(0) ATP synthase produces ATP from ADP in the presence of a proton or sodium gradient. F-type ATPases consist of two structural domains, F(1) containing the extramembraneous catalytic core and F(0) containing the membrane proton channel, linked together by a central stalk and a peripheral stalk. During catalysis, ATP synthesis in the catalytic domain of F(1) is coupled via a rotary mechanism of the central stalk subunits to proton translocation. Its function is as follows. This protein is part of the stalk that links CF(0) to CF(1). It either transmits conformational changes from CF(0) to CF(1) or is implicated in proton conduction. In Burkholderia ambifaria (strain ATCC BAA-244 / DSM 16087 / CCUG 44356 / LMG 19182 / AMMD) (Burkholderia cepacia (strain AMMD)), this protein is ATP synthase subunit delta.